The following is a 151-amino-acid chain: Shadow of prion protein (151 aa).

The signal sequence occupies residues 1-24 (MNWAPATCWALLLAAAFLCDSGAA). Residues 89 to 113 (WRRAAGPGERGLEDEEDGVPGGNGT) are disordered. Asn111 carries an N-linked (GlcNAc...) asparagine glycan. Residue Gly126 is the site of GPI-anchor amidated glycine attachment. Positions 127–151 (AGPTRGPRLCLVLGGALGALGLLRP) are cleaved as a propeptide — removed in mature form.

Belongs to the SPRN family. N-glycosylated. In terms of tissue distribution, mainly expressed in brain. In brain, it is expressed in hippocampus.

It is found in the cell membrane. Functionally, prion-like protein that has PrP(C)-like neuroprotective activity. May act as a modulator for the biological actions of normal and abnormal PrP. The polypeptide is Shadow of prion protein (SPRN) (Homo sapiens (Human)).